A 260-amino-acid chain; its full sequence is Ribonuclease PH (260 aa).

Phosphate contacts are provided by residues arginine 88 and 126-128; that span reads GTR.

The protein belongs to the RNase PH family. In terms of assembly, homohexameric ring arranged as a trimer of dimers.

It catalyses the reaction tRNA(n+1) + phosphate = tRNA(n) + a ribonucleoside 5'-diphosphate. Its function is as follows. Phosphorolytic 3'-5' exoribonuclease that plays an important role in tRNA 3'-end maturation. Removes nucleotide residues following the 3'-CCA terminus of tRNAs; can also add nucleotides to the ends of RNA molecules by using nucleoside diphosphates as substrates, but this may not be physiologically important. Probably plays a role in initiation of 16S rRNA degradation (leading to ribosome degradation) during starvation. This Mycobacterium sp. (strain JLS) protein is Ribonuclease PH.